The chain runs to 456 residues: Bifunctional protein GlmU (456 aa).

Positions 1–228 (MPQNTLNTVI…SHLAAGVNNK (228 aa)) are pyrophosphorylase. UDP-N-acetyl-alpha-D-glucosamine-binding positions include 11-14 (LAAG), Lys25, Gln75, 80-81 (GT), 102-104 (YGD), Gly138, Glu153, Asn168, and Asn226. Asp104 contacts Mg(2+). Asn226 contacts Mg(2+). The interval 229-249 (RQLAELERIFQTEQAQELLKA) is linker. Residues 250–456 (GVTLRDPARF…GWMRPEKDKQ (207 aa)) are N-acetyltransferase. The UDP-N-acetyl-alpha-D-glucosamine site is built by Arg332 and Lys350. The active-site Proton acceptor is His362. Tyr365 and Asn376 together coordinate UDP-N-acetyl-alpha-D-glucosamine. Residues Ala379, 385–386 (NY), Ser404, Ala422, and Arg439 each bind acetyl-CoA.

This sequence in the N-terminal section; belongs to the N-acetylglucosamine-1-phosphate uridyltransferase family. In the C-terminal section; belongs to the transferase hexapeptide repeat family. In terms of assembly, homotrimer. It depends on Mg(2+) as a cofactor.

The protein resides in the cytoplasm. The catalysed reaction is alpha-D-glucosamine 1-phosphate + acetyl-CoA = N-acetyl-alpha-D-glucosamine 1-phosphate + CoA + H(+). It carries out the reaction N-acetyl-alpha-D-glucosamine 1-phosphate + UTP + H(+) = UDP-N-acetyl-alpha-D-glucosamine + diphosphate. Its pathway is nucleotide-sugar biosynthesis; UDP-N-acetyl-alpha-D-glucosamine biosynthesis; N-acetyl-alpha-D-glucosamine 1-phosphate from alpha-D-glucosamine 6-phosphate (route II): step 2/2. The protein operates within nucleotide-sugar biosynthesis; UDP-N-acetyl-alpha-D-glucosamine biosynthesis; UDP-N-acetyl-alpha-D-glucosamine from N-acetyl-alpha-D-glucosamine 1-phosphate: step 1/1. It functions in the pathway bacterial outer membrane biogenesis; LPS lipid A biosynthesis. Functionally, catalyzes the last two sequential reactions in the de novo biosynthetic pathway for UDP-N-acetylglucosamine (UDP-GlcNAc). The C-terminal domain catalyzes the transfer of acetyl group from acetyl coenzyme A to glucosamine-1-phosphate (GlcN-1-P) to produce N-acetylglucosamine-1-phosphate (GlcNAc-1-P), which is converted into UDP-GlcNAc by the transfer of uridine 5-monophosphate (from uridine 5-triphosphate), a reaction catalyzed by the N-terminal domain. In Neisseria gonorrhoeae (strain ATCC 700825 / FA 1090), this protein is Bifunctional protein GlmU.